The sequence spans 446 residues: N-succinylarginine dihydrolase (446 aa).

Residues 19–28 (AGLSFGNEAS), Asn110, and 137–138 (HR) each bind substrate. Glu174 is a catalytic residue. Residue Arg213 coordinates substrate. The active site involves His249. 2 residues coordinate substrate: Asp251 and Asn364. Residue Cys370 is the Nucleophile of the active site.

This sequence belongs to the succinylarginine dihydrolase family. Homodimer.

It catalyses the reaction N(2)-succinyl-L-arginine + 2 H2O + 2 H(+) = N(2)-succinyl-L-ornithine + 2 NH4(+) + CO2. It participates in amino-acid degradation; L-arginine degradation via AST pathway; L-glutamate and succinate from L-arginine: step 2/5. Its function is as follows. Catalyzes the hydrolysis of N(2)-succinylarginine into N(2)-succinylornithine, ammonia and CO(2). The polypeptide is N-succinylarginine dihydrolase (Serratia proteamaculans (strain 568)).